Reading from the N-terminus, the 482-residue chain is Proline--tRNA ligase (482 aa).

It belongs to the class-II aminoacyl-tRNA synthetase family. ProS type 3 subfamily. In terms of assembly, homodimer.

It is found in the cytoplasm. It carries out the reaction tRNA(Pro) + L-proline + ATP = L-prolyl-tRNA(Pro) + AMP + diphosphate. Functionally, catalyzes the attachment of proline to tRNA(Pro) in a two-step reaction: proline is first activated by ATP to form Pro-AMP and then transferred to the acceptor end of tRNA(Pro). This is Proline--tRNA ligase from Mycoplasmopsis synoviae (strain 53) (Mycoplasma synoviae).